The primary structure comprises 205 residues: Thymidine kinase (205 aa).

ATP contacts are provided by residues 9-16 and 87-90; these read SAMNAGKS and DECQ. Residue Glu88 is the Proton acceptor of the active site. Residues Cys145, Cys147, Cys182, and His185 each coordinate Zn(2+).

This sequence belongs to the thymidine kinase family. As to quaternary structure, homotetramer.

Its subcellular location is the cytoplasm. It catalyses the reaction thymidine + ATP = dTMP + ADP + H(+). Allosteric enzyme which is feedback inhibited by dTTP and activated by a number of dNDP and dNTP. Functionally, phosphorylates both thymidine and deoxyuridine. The polypeptide is Thymidine kinase (Escherichia coli (strain K12)).